The primary structure comprises 949 residues: Protein translocase subunit SecA (949 aa).

Residues glutamine 87, 105–109, and aspartate 524 contribute to the ATP site; that span reads GEGKT. Disordered stretches follow at residues 852 to 876 and 896 to 939; these read PPPG…SSGG and LEFS…GSGK. Zn(2+) contacts are provided by cysteine 933, cysteine 935, cysteine 944, and histidine 945.

Belongs to the SecA family. Monomer and homodimer. Part of the essential Sec protein translocation apparatus which comprises SecA, SecYEG and auxiliary proteins SecDF-YajC and YidC. The cofactor is Zn(2+).

The protein localises to the cell inner membrane. It is found in the cytoplasm. It catalyses the reaction ATP + H2O + cellular proteinSide 1 = ADP + phosphate + cellular proteinSide 2.. Its function is as follows. Part of the Sec protein translocase complex. Interacts with the SecYEG preprotein conducting channel. Has a central role in coupling the hydrolysis of ATP to the transfer of proteins into and across the cell membrane, serving both as a receptor for the preprotein-SecB complex and as an ATP-driven molecular motor driving the stepwise translocation of polypeptide chains across the membrane. In Methylocella silvestris (strain DSM 15510 / CIP 108128 / LMG 27833 / NCIMB 13906 / BL2), this protein is Protein translocase subunit SecA.